We begin with the raw amino-acid sequence, 480 residues long: V-type ATP synthase beta chain 2 (480 aa).

Belongs to the ATPase alpha/beta chains family.

Functionally, produces ATP from ADP in the presence of a proton gradient across the membrane. The V-type beta chain is a regulatory subunit. This is V-type ATP synthase beta chain 2 (atpB2) from Treponema pallidum (strain Nichols).